The primary structure comprises 468 residues: Neuronal acetylcholine receptor subunit alpha-5 (468 aa).

The N-terminal stretch at 1–22 is a signal peptide; that stretch reads MAARGSGPRALRLLLLVQLVAG. The Extracellular portion of the chain corresponds to 23-254; that stretch reads RCGLAGAAGG…VIKRLPLFYT (232 aa). Asn-155, Asn-183, and Asn-229 each carry an N-linked (GlcNAc...) asparagine glycan. A disulfide bond links Cys-170 and Cys-184. Residues Cys-234 and Cys-235 are joined by a disulfide bond. The next 3 membrane-spanning stretches (helical) occupy residues 255–275, 282–302, and 317–337; these read LFLI…FYLP, ICLC…IEEI, and LVFT…AINI. The Cytoplasmic segment spans residues 338–429; the sequence is HHRSSSTHNA…WKFIAQVLDR (92 aa). A helical membrane pass occupies residues 430–451; it reads MFLWTFLFVSIVGSLGLFVPVI. The Extracellular portion of the chain corresponds to 452–468; sequence YKWANILIPVHIGNANK.

Belongs to the ligand-gated ion channel (TC 1.A.9) family. Acetylcholine receptor (TC 1.A.9.1) subfamily. Alpha-5/CHRNA5 sub-subfamily. Neuronal AChR that forms heteropentamers composed of two different type of subunits: alpha and non-alpha (beta). CHRNA5/alpha-5 subunit is only able to form functional nAChRs when co-assembled with another alpha subunit, can be combined to CHRNA4/alpha-4 or CHRNA3/alpha-3 and CHRNB4/beta-4 or CHRNB2/beta-2 to give rise to functional receptors. Interacts with LYPD6.

It is found in the synaptic cell membrane. It localises to the cell membrane. It catalyses the reaction Ca(2+)(in) = Ca(2+)(out). The enzyme catalyses K(+)(in) = K(+)(out). The catalysed reaction is Na(+)(in) = Na(+)(out). Activated by a myriad of ligands such as acetylcholine, cytisine, nicotine, choline and epibatidine. In terms of biological role, component of neuronal acetylcholine receptors (nAChRs) that function as pentameric, ligand-gated cation channels with high calcium permeability among other activities. nAChRs are excitatory neurotrasnmitter receptors formed by a collection of nAChR subunits known to mediate synaptic transmission in the nervous system and the neuromuscular junction. Each nAchR subunit confers differential attributes to channel properties, including activation, deactivation and desensitization kinetics, pH sensitivity, cation permeability, and binding to allosteric modulators. Has an accessory rather than functional role and is only able to form functional nAChRs when co-assembled with another beta subunit. Participates in pentameric assemblies along with CHRNA3, CHRNA4, CHRNB2 and CHRNB4. Increases receptor sensitivity to acetylcholine and nicotine when associated with CHRNA4 and CHRNB2. Plays a role in nicotine addiction. The sequence is that of Neuronal acetylcholine receptor subunit alpha-5 from Homo sapiens (Human).